Consider the following 416-residue polypeptide: D-amino acid dehydrogenase (416 aa).

3 to 17 (VTILGAGVIGVTTAY) contributes to the FAD binding site.

It belongs to the DadA oxidoreductase family. FAD is required as a cofactor.

It carries out the reaction a D-alpha-amino acid + A + H2O = a 2-oxocarboxylate + AH2 + NH4(+). It functions in the pathway amino-acid degradation; D-alanine degradation; NH(3) and pyruvate from D-alanine: step 1/1. Functionally, oxidative deamination of D-amino acids. The chain is D-amino acid dehydrogenase from Rhizobium rhizogenes (strain K84 / ATCC BAA-868) (Agrobacterium radiobacter).